Here is a 338-residue protein sequence, read N- to C-terminus: Malate dehydrogenase, mitochondrial (338 aa).

The N-terminal 24 residues, 1-24, are a transit peptide targeting the mitochondrion; the sequence is MLSALARPASAVLRRSFSTSAQNN. NAD(+) contacts are provided by residues 31–37 and Asp-57; that span reads GASGGIG. Residue Ser-33 is glycosylated (O-linked (GlcNAc) serine). An N6-acetyllysine; alternate mark is found at Lys-78 and Lys-91. N6-succinyllysine; alternate occurs at positions 78 and 91. Residues Arg-104 and Arg-110 each coordinate substrate. Residues Asn-117 and 140 to 142 contribute to the NAD(+) site; that span reads IAN. Residue Asn-142 participates in substrate binding. Lys-165 carries the N6-acetyllysine modification. A substrate-binding site is contributed by Arg-176. At Lys-185 the chain carries N6-acetyllysine; alternate. Position 185 is an N6-succinyllysine; alternate (Lys-185). His-200 functions as the Proton acceptor in the catalytic mechanism. The residue at position 203 (Lys-203) is an N6-succinyllysine. N6-acetyllysine; alternate is present on residues Lys-215 and Lys-239. N6-succinyllysine; alternate occurs at positions 215 and 239. N6-malonyllysine; alternate is present on Lys-239. Ser-246 carries the phosphoserine modification. Residue Met-251 coordinates NAD(+). N6-succinyllysine is present on Lys-269. An N6-acetyllysine; alternate mark is found at Lys-296, Lys-301, Lys-307, Lys-314, and Lys-324. N6-succinyllysine; alternate occurs at positions 296, 301, 307, 314, and 324. An N6-malonyllysine; alternate modification is found at Lys-307. The residue at position 326 (Ser-326) is a Phosphoserine. Lys-328, Lys-329, and Lys-335 each carry N6-acetyllysine; alternate. At Lys-328 the chain carries N6-succinyllysine; alternate. Position 329 is an N6-malonyllysine; alternate (Lys-329). An N6-succinyllysine; alternate modification is found at Lys-335.

This sequence belongs to the LDH/MDH superfamily. MDH type 1 family. As to quaternary structure, homodimer. Post-translationally, acetylation is enhanced after treatment either with trichostin A (TCA) or with nicotinamide (NAM) with the appearance of tri- and tetraacetylations. Glucose also increases acetylation.

The protein resides in the mitochondrion matrix. It carries out the reaction (S)-malate + NAD(+) = oxaloacetate + NADH + H(+). With respect to regulation, enzyme activity is enhanced by acetylation. This chain is Malate dehydrogenase, mitochondrial (MDH2), found in Pongo abelii (Sumatran orangutan).